The sequence spans 452 residues: GATA-binding factor 2 (452 aa).

The segment at 130–182 (GGSLYPGTGSSACPSSSHSSPHLFGFPPTPPKDVSPDPGPASPPSSSRLEDKD) is disordered. Positions 139-151 (SSACPSSSHSSPH) are enriched in low complexity. Residues 156-172 (PPTPPKDVSPDPGPASP) are compositionally biased toward pro residues. 2 GATA-type zinc fingers span residues 267–291 (CVNCGATATPLWRRDGTGHYLCNAC) and 321–345 (CANCQTSTTTLWRRNANGDPVCNAC). Residues 426-438 (QTPTPIHPSSSLS) are compositionally biased toward polar residues. Positions 426–452 (QTPTPIHPSSSLSFGHPHHSSMVTAMG) are disordered.

As to expression, expressed in the developing ventral blood island, and in the embryonic nervous system.

The protein resides in the nucleus. This chain is GATA-binding factor 2 (gata2), found in Xenopus laevis (African clawed frog).